Here is a 155-residue protein sequence, read N- to C-terminus: Small ribosomal subunit protein uS7cz/uS7cy (155 aa).

Belongs to the universal ribosomal protein uS7 family. Part of the 30S ribosomal subunit.

The protein localises to the plastid. It localises to the chloroplast. Its function is as follows. One of the primary rRNA binding proteins, it binds directly to 16S rRNA where it nucleates assembly of the head domain of the 30S subunit. In Populus trichocarpa (Western balsam poplar), this protein is Small ribosomal subunit protein uS7cz/uS7cy (rps7-A).